The following is a 377-amino-acid chain: Chaperone protein DnaJ (377 aa).

The 65-residue stretch at Asp-6–Gly-70 folds into the J domain. The segment at Gly-143–Ser-225 adopts a CR-type zinc-finger fold. The Zn(2+) site is built by Cys-156, Cys-159, Cys-173, Cys-176, Cys-199, Cys-202, Cys-213, and Cys-216. CXXCXGXG motif repeat units lie at residues Cys-156–Gly-163, Cys-173–Gly-180, Cys-199–Gly-206, and Cys-213–Lys-220.

This sequence belongs to the DnaJ family. As to quaternary structure, homodimer. The cofactor is Zn(2+).

The protein localises to the cytoplasm. Participates actively in the response to hyperosmotic and heat shock by preventing the aggregation of stress-denatured proteins and by disaggregating proteins, also in an autonomous, DnaK-independent fashion. Unfolded proteins bind initially to DnaJ; upon interaction with the DnaJ-bound protein, DnaK hydrolyzes its bound ATP, resulting in the formation of a stable complex. GrpE releases ADP from DnaK; ATP binding to DnaK triggers the release of the substrate protein, thus completing the reaction cycle. Several rounds of ATP-dependent interactions between DnaJ, DnaK and GrpE are required for fully efficient folding. Also involved, together with DnaK and GrpE, in the DNA replication of plasmids through activation of initiation proteins. This Mycoplasmopsis pulmonis (strain UAB CTIP) (Mycoplasma pulmonis) protein is Chaperone protein DnaJ.